The primary structure comprises 345 residues: Selenide, water dikinase (345 aa).

Cys15 is a catalytic residue. Residues Lys18 and 46-48 each bind ATP; that span reads SKD. Residue Asp49 participates in Mg(2+) binding. Residues Asp66, Asp89, and 137–139 each bind ATP; that span reads GHS. Residue Asp89 participates in Mg(2+) binding. Asp225 lines the Mg(2+) pocket.

This sequence belongs to the selenophosphate synthase 1 family. Class I subfamily. In terms of assembly, homodimer. It depends on Mg(2+) as a cofactor.

It carries out the reaction hydrogenselenide + ATP + H2O = selenophosphate + AMP + phosphate + 2 H(+). In terms of biological role, synthesizes selenophosphate from selenide and ATP. The protein is Selenide, water dikinase of Aeromonas salmonicida (strain A449).